The following is a 534-amino-acid chain: Calcium-dependent protein kinase 29 (534 aa).

Positions 1 to 72 are disordered; the sequence is MGFCFSKFGK…STSSGSQIGP (72 aa). The N-myristoyl glycine moiety is linked to residue Gly-2. A compositionally biased stretch (low complexity) spans 16–27; sequence IPISSSSDSSPP. Residues 49–63 are compositionally biased toward pro residues; sequence NPQPKPKPAPPPPPS. The Protein kinase domain occupies 85–343; it reads YDLHKELGRG…AAEALEHPWM (259 aa). ATP-binding positions include 91–99 and Lys-114; that span reads LGRGQFGIT. Asp-209 (proton acceptor) is an active-site residue. Ser-249 bears the Phosphoserine mark. The tract at residues 348-378 is autoinhibitory domain; the sequence is ISDKPINSAVLVRMKQFRAMNKLKKLALKVI. EF-hand domains lie at 385-420, 421-456, 457-492, and 493-527; these read EEIKGLKQTFKNMDTDESGTITFDELRNGLHRLGSK, LTESEIKQLMEAADVDKSGTIDYIEFVTATMHRHRL, EKEENLIEAFKYFDKDRSGFITRDELKHSMTEYGMG, and DDATIDEVINDVDTDNDGRINYEEFVAMMRKGTTD. Ca(2+) contacts are provided by Asp-398, Asp-400, Ser-402, Thr-404, Glu-409, Asp-434, Asp-436, Ser-438, Thr-440, Glu-445, Asp-470, Asp-472, Ser-474, Glu-481, Asp-505, Asp-507, Asp-509, Arg-511, and Glu-516.

Belongs to the protein kinase superfamily. Ser/Thr protein kinase family. CDPK subfamily.

Its subcellular location is the membrane. The enzyme catalyses L-seryl-[protein] + ATP = O-phospho-L-seryl-[protein] + ADP + H(+). The catalysed reaction is L-threonyl-[protein] + ATP = O-phospho-L-threonyl-[protein] + ADP + H(+). Activated by calcium. Autophosphorylation may play an important role in the regulation of the kinase activity. Functionally, may play a role in signal transduction pathways that involve calcium as a second messenger. This chain is Calcium-dependent protein kinase 29 (CPK29), found in Arabidopsis thaliana (Mouse-ear cress).